Reading from the N-terminus, the 690-residue chain is Eukaryotic translation initiation factor 3 subunit B (690 aa).

The segment covering 1-11 (MAKKKSEDHSG) has biased composition (basic and acidic residues). The disordered stretch occupies residues 1 to 37 (MAKKKSEDHSGGDANDSDYNEEPNFEDPPNFVDNISD). A compositionally biased stretch (acidic residues) spans 15–25 (NDSDYNEEPNF). Residues 57–141 (SVVVVDNIPK…HTFAVNLFTD (85 aa)) form the RRM domain. WD repeat units lie at residues 207–246 (TRER…KIQK), 247–289 (FPHT…EKRS), 293–331 (DGMS…LLDL), 334–369 (IKIP…TLME), 442–484 (EIRE…KPSL), and 530–575 (PDHF…IKRT). A coiled-coil region spans residues 614 to 645 (QKDRLRLTRASKELLEKRSQLRETFMEYRNKR).

This sequence belongs to the eIF-3 subunit B family. In terms of assembly, component of the eukaryotic translation initiation factor 3 (eIF-3) complex. The eIF-3 complex interacts with pix. Interacts with mxt.

The protein resides in the cytoplasm. RNA-binding component of the eukaryotic translation initiation factor 3 (eIF-3) complex, which is involved in protein synthesis of a specialized repertoire of mRNAs and, together with other initiation factors, stimulates binding of mRNA and methionyl-tRNAi to the 40S ribosome. The eIF-3 complex specifically targets and initiates translation of a subset of mRNAs involved in cell proliferation. The protein is Eukaryotic translation initiation factor 3 subunit B of Drosophila pseudoobscura pseudoobscura (Fruit fly).